The sequence spans 584 residues: Protein FAM117B (584 aa).

The tract at residues 1 to 214 (MSQRVRRNGS…SSSSSIIRRT (214 aa)) is disordered. S10 bears the Phosphoserine mark. Over residues 53-79 (TRGGGGGGNNGGNGGASGPSGGGGSGG) the composition is skewed to gly residues. Over residues 80 to 90 (PRTASRSTSPT) the composition is skewed to low complexity. S102 carries the post-translational modification Phosphoserine. The span at 114-132 (TSTRGTSPTRGTAPGARSS) shows a compositional bias: low complexity. A compositionally biased stretch (pro residues) spans 133–142 (PPRPQPPPPL). Residues 145–154 (TVSSPSSSPT) are compositionally biased toward polar residues. Low complexity predominate over residues 204 to 214 (SSSSSSIIRRT). Phosphoserine occurs at positions 206, 215, 216, and 268. Disordered stretches follow at residues 227–461 (GHWP…SYMF) and 551–584 (STNT…EAEG). A compositionally biased stretch (basic residues) spans 287–297 (RSKHSSRHHRD). S340 bears the Phosphoserine mark. Positions 350–361 (IIIKETGEKEEQ) are enriched in basic and acidic residues. Residues 379 to 392 (QRSSSTRSIDTQTP) show a composition bias toward polar residues. Phosphoserine is present on S386. The span at 399-412 (SNNSSRSQSVSPTS) shows a compositional bias: low complexity. Phosphoserine occurs at positions 444 and 452.

This Mus musculus (Mouse) protein is Protein FAM117B (Fam117b).